Here is a 199-residue protein sequence, read N- to C-terminus: Thymidylate kinase (199 aa).

7–14 (GIDGSGKS) serves as a coordination point for ATP.

The protein belongs to the thymidylate kinase family.

The catalysed reaction is dTMP + ATP = dTDP + ADP. Phosphorylation of dTMP to form dTDP in both de novo and salvage pathways of dTTP synthesis. In Thermosipho melanesiensis (strain DSM 12029 / CIP 104789 / BI429), this protein is Thymidylate kinase.